A 694-amino-acid chain; its full sequence is Outer dynein arm-docking complex subunit 1 (694 aa).

2 coiled-coil regions span residues 27 to 192 (ELSR…RYLN) and 222 to 259 (REEA…HLEQ). Positions 271 to 290 (RQPDPGVVQKEEQRAWETSE) are disordered. Residues 339-418 (NFINEQNSEL…EKIKTDIQVL (80 aa)) adopt a coiled-coil conformation. Disordered regions lie at residues 531–550 (QDEE…TLSS) and 571–694 (SILS…RGYN). Phosphoserine is present on residues Ser-536, Ser-542, Ser-543, and Ser-545. Residues 628–642 (TSSSSYLGSTGYLET) are compositionally biased toward low complexity. Residues 655 to 672 (SQSMGSEMSRGFSSGSGQ) are compositionally biased toward polar residues. Residues 673 to 687 (TSSAAPASRPSSATS) are compositionally biased toward low complexity.

It belongs to the ODA1/DCC2 family. Component of the outer dynein arm-docking complex along with ODAD2, ODAD3, ODAD4 and CLXN. Interacts with ODAD3. Interacts with ODAD4; this interaction may facilitate the recruitment and/or attachment of outer dynein arm docking complex proteins,including ODAD1, ODAD3, and ODAD4 to ciliary axonemes. Interacts with DNAH9. Interacts with MNS1. Interacts with PIERCE1 and PIERCE2; the interactions link the outer dynein arms docking complex (ODA-DC) to the internal microtubule inner proteins (MIP) in cilium axoneme.

It is found in the cytoplasm. The protein localises to the cytoskeleton. Its subcellular location is the cilium axoneme. Functionally, component of the outer dynein arm-docking complex that mediates outer dynein arms (ODA) binding onto the doublet microtubule. Involved in mediating assembly of both ODAs and their axonemal docking complex onto ciliary microtubules. The sequence is that of Outer dynein arm-docking complex subunit 1 (Odad1) from Rattus norvegicus (Rat).